We begin with the raw amino-acid sequence, 194 residues long: Pyridoxal 5'-phosphate synthase subunit PdxT (194 aa).

54–56 provides a ligand contact to L-glutamine; sequence GES. The active-site Nucleophile is cysteine 83. Residues arginine 110 and 139–140 contribute to the L-glutamine site; that span reads IR. Catalysis depends on charge relay system residues histidine 175 and glutamate 177.

This sequence belongs to the glutaminase PdxT/SNO family. In the presence of PdxS, forms a dodecamer of heterodimers. Only shows activity in the heterodimer.

The enzyme catalyses aldehydo-D-ribose 5-phosphate + D-glyceraldehyde 3-phosphate + L-glutamine = pyridoxal 5'-phosphate + L-glutamate + phosphate + 3 H2O + H(+). The catalysed reaction is L-glutamine + H2O = L-glutamate + NH4(+). The protein operates within cofactor biosynthesis; pyridoxal 5'-phosphate biosynthesis. Functionally, catalyzes the hydrolysis of glutamine to glutamate and ammonia as part of the biosynthesis of pyridoxal 5'-phosphate. The resulting ammonia molecule is channeled to the active site of PdxS. The polypeptide is Pyridoxal 5'-phosphate synthase subunit PdxT (Methanoregula boonei (strain DSM 21154 / JCM 14090 / 6A8)).